We begin with the raw amino-acid sequence, 105 residues long: N(4)-acetylcytidine amidohydrolase (105 aa).

An ASCH domain is found at 7–93 (TFFERFEHDI…VIAEIYPGLE (87 aa)). Lysine 21 acts as the Proton acceptor in catalysis. Threonine 24 serves as the catalytic Nucleophile. Glutamate 74 acts as the Proton donor in catalysis.

It belongs to the N(4)-acetylcytidine amidohydrolase family.

It catalyses the reaction N(4)-acetylcytidine + H2O = cytidine + acetate + H(+). It carries out the reaction N(4)-acetyl-2'-deoxycytidine + H2O = 2'-deoxycytidine + acetate + H(+). The enzyme catalyses N(4)-acetylcytosine + H2O = cytosine + acetate + H(+). In terms of biological role, catalyzes the hydrolysis of N(4)-acetylcytidine (ac4C). The chain is N(4)-acetylcytidine amidohydrolase from Shewanella baltica (strain OS155 / ATCC BAA-1091).